The following is a 552-amino-acid chain: Polypeptide N-acetylgalactosaminyltransferase 14 (552 aa).

The Cytoplasmic portion of the chain corresponds to 1–6 (MRRLTR). A helical; Signal-anchor for type II membrane protein transmembrane segment spans residues 7 to 26 (RLVLPVFGVLWITVLLFFWV). Residues 27-552 (TKRKLEVPTG…MSQHWDMVSS (526 aa)) are Lumenal-facing. Intrachain disulfides connect Cys-101–Cys-328, Cys-319–Cys-397, Cys-430–Cys-449, Cys-476–Cys-493, and Cys-517–Cys-538. The interval 110 to 215 (LPPTSIIITF…RDWLQPLLHR (106 aa)) is catalytic subdomain A. Substrate-binding residues include Asp-151 and Arg-176. Asp-199 is a Mn(2+) binding site. Ser-200 lines the substrate pocket. Residue His-201 participates in Mn(2+) binding. Residues 274–336 (PIRTPIIAGG…PCSRVGHVFR (63 aa)) form a catalytic subdomain B region. Trp-305 lines the substrate pocket. His-333 provides a ligand contact to Mn(2+). Residues Arg-336, His-339, and Tyr-341 each coordinate substrate. A Ricin B-type lectin domain is found at 415–550 (KESSIQKGNI…SLMSQHWDMV (136 aa)).

It belongs to the glycosyltransferase 2 family. GalNAc-T subfamily. Mn(2+) is required as a cofactor. In terms of tissue distribution, detected in renal tubules (at protein level). Highly expressed in fetal and adult kidney. Widely expressed at low level. Weakly expressed in whole brain, cerebellum, thymus, lung, mammary gland, liver, stomach, small intestine, colon, pancreas, spleen, bladder, uterus, placenta, testis, ovary, skeletal muscle, leukocyte, B-cell, bone marrow, fetal brain, fetal thymus, fetal lung, fetal liver, fetal small intestine, fetal spleen, fetal skeletal and fetus. Detected in renal tubules (at protein level).

It localises to the golgi apparatus membrane. The enzyme catalyses L-seryl-[protein] + UDP-N-acetyl-alpha-D-galactosamine = a 3-O-[N-acetyl-alpha-D-galactosaminyl]-L-seryl-[protein] + UDP + H(+). It catalyses the reaction L-threonyl-[protein] + UDP-N-acetyl-alpha-D-galactosamine = a 3-O-[N-acetyl-alpha-D-galactosaminyl]-L-threonyl-[protein] + UDP + H(+). It functions in the pathway protein modification; protein glycosylation. Functionally, catalyzes the initial reaction in O-linked oligosaccharide biosynthesis, the transfer of an N-acetyl-D-galactosamine residue to a serine or threonine residue on the protein receptor. Displays activity toward mucin-derived peptide substrates such as Muc2, Muc5AC, Muc7, and Muc13 (-58). May be involved in O-glycosylation in kidney. In Homo sapiens (Human), this protein is Polypeptide N-acetylgalactosaminyltransferase 14 (GALNT14).